We begin with the raw amino-acid sequence, 227 residues long: Lysosomal-associated transmembrane protein 4B (227 aa).

The next 4 membrane-spanning stretches (helical) occupy residues 26-46, 72-92, 100-120, and 153-173; these read ILLGVWYLIINAVVLLILLSA, MCIAIAISLLMILICAMATYG, WIIPFFCYQIFDFALNTLVAI, and CLVLIILLFIGILLTLKGYLI. Positions 205–222 are required for NEDD4 interaction; sequence PPYDDATAVPSTAKEPPP.

This sequence belongs to the LAPTM4/LAPTM5 transporter family. Homooligomer; upon reaching the lysosomes. Interacts with MCOLN1. Interacts with NEDD4; may play a role in the lysosomal sorting of LAPTM4B; enhances HGS association with NEDD4; mediates inhibition of EGFR degradation. Interacts with PIP5K1C; promotes SNX5 association with LAPTM4B; kinase activity of PIP5K1C is required; interaction is regulated by phosphatidylinositol 4,5-bisphosphate generated by PIP5K1C. Interacts with HGS; promotes HGS ubiquitination. Interacts with SNX5. Interacts with SLC3A2 and SLC7A5; recruits SLC3A2 and SLC7A5 to lysosomes to promote leucine uptake into these organelles and is required for mTORC1 activation. Interacts with LRRC32; decreases TGFB1 production in regulatory T cells. Interacts with BECN1; competes with EGFR for LAPTM4B binding; regulates EGFR activity. Interacts with EGFR; positively correlates with EGFR activation. Post-translationally, undergoes proteolytic cleavage following delivery to the lysosomes. Ubiquitinated by NEDD4.

It localises to the endomembrane system. Its subcellular location is the late endosome membrane. It is found in the cell membrane. The protein localises to the cell projection. The protein resides in the lysosome membrane. It localises to the endosome membrane. Its subcellular location is the endosome. It is found in the multivesicular body membrane. The protein localises to the multivesicular body lumen. Functionally, required for optimal lysosomal function. Blocks EGF-stimulated EGFR intraluminal sorting and degradation. Conversely by binding with the phosphatidylinositol 4,5-bisphosphate, regulates its PIP5K1C interaction, inhibits HGS ubiquitination and relieves LAPTM4B inhibition of EGFR degradation. Recruits SLC3A2 and SLC7A5 (the Leu transporter) to the lysosome, promoting entry of leucine and other essential amino acid (EAA) into the lysosome, stimulating activation of proton-transporting vacuolar (V)-ATPase protein pump (V-ATPase) and hence mTORC1 activation. Plays a role as negative regulator of TGFB1 production in regulatory T cells. Binds ceramide and facilitates its exit from late endosome in order to control cell death pathways. This is Lysosomal-associated transmembrane protein 4B from Mus musculus (Mouse).